Consider the following 353-residue polypeptide: RNA 3'-terminal phosphate cyclase (353 aa).

ATP-binding positions include glutamine 100 and histidine 285–glutamine 289. Histidine 311 (tele-AMP-histidine intermediate) is an active-site residue.

The protein belongs to the RNA 3'-terminal cyclase family. Type 1 subfamily.

It localises to the cytoplasm. The enzyme catalyses a 3'-end 3'-phospho-ribonucleotide-RNA + ATP = a 3'-end 2',3'-cyclophospho-ribonucleotide-RNA + AMP + diphosphate. In terms of biological role, catalyzes the conversion of 3'-phosphate to a 2',3'-cyclic phosphodiester at the end of RNA. The mechanism of action of the enzyme occurs in 3 steps: (A) adenylation of the enzyme by ATP; (B) transfer of adenylate to an RNA-N3'P to produce RNA-N3'PP5'A; (C) and attack of the adjacent 2'-hydroxyl on the 3'-phosphorus in the diester linkage to produce the cyclic end product. The biological role of this enzyme is unknown but it is likely to function in some aspects of cellular RNA processing. This is RNA 3'-terminal phosphate cyclase from Nitrosospira multiformis (strain ATCC 25196 / NCIMB 11849 / C 71).